The chain runs to 284 residues: Acetylglutamate kinase (284 aa).

Substrate-binding positions include 64–65 (GG), Arg-86, and Asn-181.

The protein belongs to the acetylglutamate kinase family. ArgB subfamily.

The protein resides in the cytoplasm. The catalysed reaction is N-acetyl-L-glutamate + ATP = N-acetyl-L-glutamyl 5-phosphate + ADP. It functions in the pathway amino-acid biosynthesis; L-arginine biosynthesis; N(2)-acetyl-L-ornithine from L-glutamate: step 2/4. In terms of biological role, catalyzes the ATP-dependent phosphorylation of N-acetyl-L-glutamate. In Wolinella succinogenes (strain ATCC 29543 / DSM 1740 / CCUG 13145 / JCM 31913 / LMG 7466 / NCTC 11488 / FDC 602W) (Vibrio succinogenes), this protein is Acetylglutamate kinase.